Consider the following 267-residue polypeptide: tRNA pseudouridine synthase A (267 aa).

The Nucleophile role is filled by aspartate 51. Tyrosine 109 is a substrate binding site.

The protein belongs to the tRNA pseudouridine synthase TruA family. As to quaternary structure, homodimer.

The enzyme catalyses uridine(38/39/40) in tRNA = pseudouridine(38/39/40) in tRNA. Its function is as follows. Formation of pseudouridine at positions 38, 39 and 40 in the anticodon stem and loop of transfer RNAs. This Staphylococcus aureus (strain bovine RF122 / ET3-1) protein is tRNA pseudouridine synthase A.